A 192-amino-acid chain; its full sequence is Orotate phosphoribosyltransferase (192 aa).

5-phospho-alpha-D-ribose 1-diphosphate is bound at residue 116 to 124 (EDIVTTGLS). Orotate-binding residues include Thr120 and Arg148.

It belongs to the purine/pyrimidine phosphoribosyltransferase family. PyrE subfamily. In terms of assembly, homodimer. It depends on Mg(2+) as a cofactor.

It catalyses the reaction orotidine 5'-phosphate + diphosphate = orotate + 5-phospho-alpha-D-ribose 1-diphosphate. Its pathway is pyrimidine metabolism; UMP biosynthesis via de novo pathway; UMP from orotate: step 1/2. Catalyzes the transfer of a ribosyl phosphate group from 5-phosphoribose 1-diphosphate to orotate, leading to the formation of orotidine monophosphate (OMP). This Brucella abortus (strain S19) protein is Orotate phosphoribosyltransferase.